The primary structure comprises 435 residues: MKRLPLHLLDEILFNLDPKSLGKMRCTNKSINTHISDDPNFKFEYFSRIGSSLLHISKVGSKFLCFYPYAISRLFKNMTPLKNLCNILGSCSGLVLLSINGILCVANPLTKKFRFLHYSIWGNETWIGFAVDQIDRATQRFKIVFISEQLEVSNPYETTYQFRINTGESWSLSKTTITCRASNLKKGKNSKPVYVNGDLHWLRKDGSIVAFNPETEKARLIQSQFNRKPGKLLLCTGDNRLTLISATDAVISVYALETDGQWILVRWIKNEVVHQSLPLLYWNVQAYDGKCLLVRMMSLVGSVIHRYDLRANKWRVLGSIPTWCDADRDFFLFKPSWSSVIGLLDQEHVHVLMPMPMPMPMPMPMPMHMHMHMHMPMPMAMPMPMPIAMAMPMPMPMPMPMPMTKTETETVTRSEVISSVMAIMGLVNRTLSFIN.

The F-box domain maps to 1-49; sequence MKRLPLHLLDEILFNLDPKSLGKMRCTNKSINTHISDDPNFKFEYFSRI. Kelch repeat units lie at residues 192 to 238 and 280 to 335; these read PVYV…CTGD and LYWN…LFKP.

The chain is Putative F-box/kelch-repeat protein At1g20790 from Arabidopsis thaliana (Mouse-ear cress).